The primary structure comprises 478 residues: Aspartyl/glutamyl-tRNA(Asn/Gln) amidotransferase subunit B (478 aa).

Belongs to the GatB/GatE family. GatB subfamily. In terms of assembly, heterotrimer of A, B and C subunits.

The enzyme catalyses L-glutamyl-tRNA(Gln) + L-glutamine + ATP + H2O = L-glutaminyl-tRNA(Gln) + L-glutamate + ADP + phosphate + H(+). The catalysed reaction is L-aspartyl-tRNA(Asn) + L-glutamine + ATP + H2O = L-asparaginyl-tRNA(Asn) + L-glutamate + ADP + phosphate + 2 H(+). Its function is as follows. Allows the formation of correctly charged Asn-tRNA(Asn) or Gln-tRNA(Gln) through the transamidation of misacylated Asp-tRNA(Asn) or Glu-tRNA(Gln) in organisms which lack either or both of asparaginyl-tRNA or glutaminyl-tRNA synthetases. The reaction takes place in the presence of glutamine and ATP through an activated phospho-Asp-tRNA(Asn) or phospho-Glu-tRNA(Gln). The sequence is that of Aspartyl/glutamyl-tRNA(Asn/Gln) amidotransferase subunit B from Dichelobacter nodosus (strain VCS1703A).